Consider the following 1298-residue polypeptide: Histone-lysine N-methyltransferase EHMT1 (1298 aa).

Disordered regions lie at residues Met-1–Ala-111 and Ala-144–Pro-192. Ala-2 carries the N-acetylalanine modification. A Glycyl lysine isopeptide (Lys-Gly) (interchain with G-Cter in SUMO1); alternate cross-link involves residue Lys-22. Residue Lys-22 forms a Glycyl lysine isopeptide (Lys-Gly) (interchain with G-Cter in SUMO2); alternate linkage. Basic and acidic residues predominate over residues Ser-38 to Ala-50. Composition is skewed to polar residues over residues Thr-54–Ala-67 and Ser-76–Thr-89. Positions Val-96–Lys-105 are enriched in basic and acidic residues. Glycyl lysine isopeptide (Lys-Gly) (interchain with G-Cter in SUMO2) cross-links involve residues Lys-190, Lys-199, Lys-231, Lys-234, Lys-317, and Lys-327. Residues Val-211–Lys-234 form a disordered region. The segment covering Ala-217–Lys-234 has biased composition (basic and acidic residues). Residues Val-339 to Tyr-479 form a disordered region. A compositionally biased stretch (acidic residues) spans Leu-344 to Asp-360. Over residues Glu-373–Gly-393 the composition is skewed to basic and acidic residues. Over residues Glu-394–Leu-416 the composition is skewed to acidic residues. Lys-432 is covalently cross-linked (Glycyl lysine isopeptide (Lys-Gly) (interchain with G-Cter in SUMO2)). Ser-435 bears the Phosphoserine mark. A compositionally biased stretch (basic residues) spans Pro-440 to Pro-452. Over residues Ser-460 to Gly-474 the composition is skewed to polar residues. Phosphoserine is present on Ser-483. Glycyl lysine isopeptide (Lys-Gly) (interchain with G-Cter in SUMO2) cross-links involve residues Lys-492, Lys-559, Lys-644, Lys-659, Lys-684, and Lys-731. The interval Lys-644 to Lys-717 is disordered. ANK repeat units follow at residues Phe-737–Phe-766, Asn-772–Thr-801, Asp-805–Pro-834, Glu-838–Cys-868, Gly-872–Ile-901, Glu-905–Ala-934, His-938–Leu-967, and Glu-971–Ser-1004. The histone H3K9me binding stretch occupies residues Glu-905 to Asn-907. Ser-1004 and Ser-1048 each carry phosphoserine. Residues Gln-1060–Gly-1123 enclose the Pre-SET domain. 9 residues coordinate Zn(2+): Cys-1062, Cys-1064, Cys-1068, Cys-1073, Cys-1075, Cys-1105, Cys-1109, Cys-1111, and Cys-1115. Residues Ala-1126–Gly-1243 enclose the SET domain. S-adenosyl-L-methionine is bound by residues Met-1136–Trp-1138, Tyr-1173, and Asn-1200–His-1201. Residues Asp-1162–Asp-1181 are interaction with histone H3. Residue Cys-1203 participates in Zn(2+) binding. Residues Tyr-1242–Arg-1245 are interaction with histone H3. Residue Cys-1256 participates in Zn(2+) binding. Arg-1257 lines the S-adenosyl-L-methionine pocket. 2 residues coordinate Zn(2+): Cys-1258 and Cys-1263. The segment at Gln-1274–Leu-1298 is disordered.

Belongs to the class V-like SAM-binding methyltransferase superfamily. In terms of assembly, heterodimer; heterodimerizes with EHMT2. Interacts with WIZ and EHMT2. Part of the E2F6.com-1 complex in G0 phase composed of E2F6, MGA, MAX, TFDP1, CBX3, BAT8, EHMT1, RING1, RNF2, MBLR, L3MBTL2 and YAF2. Interacts (via ANK repeats) with RELA (when monomethylated at 'Lys-310'). Interacts with MPHOSPH8. Interacts with CDYL. Interacts with REST only in the presence of CDYL. Part of a complex containing at least CDYL, REST, WIZ, SETB1, EHMT1 and EHMT2. Interacts with BAZ2B. As to expression, widely expressed.

The protein localises to the nucleus. The protein resides in the chromosome. It catalyses the reaction N(6)-methyl-L-lysyl(9)-[histone H3] + S-adenosyl-L-methionine = N(6),N(6)-dimethyl-L-lysyl(9)-[histone H3] + S-adenosyl-L-homocysteine + H(+). It carries out the reaction L-lysyl(9)-[histone H3] + S-adenosyl-L-methionine = N(6)-methyl-L-lysyl(9)-[histone H3] + S-adenosyl-L-homocysteine + H(+). Its activity is regulated as follows. Methyltransferase activity is inhibited by BIX-01294. Efficiently inhibited by compound E72, a BIX-01294 derivative in which the diazepane ring and the benzyl are replaced with a 3-dimethylaminopropyl and a 5-aminopentyl group at sites B and C, respectively. Functionally, histone methyltransferase that specifically mono- and dimethylates 'Lys-9' of histone H3 (H3K9me1 and H3K9me2, respectively) in euchromatin. H3K9me represents a specific tag for epigenetic transcriptional repression by recruiting HP1 proteins to methylated histones. Also weakly methylates 'Lys-27' of histone H3 (H3K27me). Also required for DNA methylation, the histone methyltransferase activity is not required for DNA methylation, suggesting that these 2 activities function independently. Probably targeted to histone H3 by different DNA-binding proteins like E2F6, MGA, MAX and/or DP1. During G0 phase, it probably contributes to silencing of MYC- and E2F-responsive genes, suggesting a role in G0/G1 transition in cell cycle. In addition to the histone methyltransferase activity, also methylates non-histone proteins: mediates dimethylation of 'Lys-373' of p53/TP53. Represses the expression of mitochondrial function-related genes, perhaps by occupying their promoter regions, working in concert with probable chromatin reader BAZ2B. This chain is Histone-lysine N-methyltransferase EHMT1 (EHMT1), found in Homo sapiens (Human).